Reading from the N-terminus, the 1099-residue chain is Carbamoyl phosphate synthase large chain (1099 aa).

Residues 1–402 (MPKREDIKRI…ALGKALRSLE (402 aa)) form a carboxyphosphate synthetic domain region. Residues Arg-129, Arg-169, Gly-175, Gly-176, Glu-208, Val-210, Glu-215, Gly-241, Ile-242, His-243, Gln-285, and Glu-299 each contribute to the ATP site. The region spanning 133 to 328 (KETMEKAGLE…IAKVAALLAV (196 aa)) is the ATP-grasp 1 domain. Positions 285, 299, and 301 each coordinate Mg(2+). Residues Gln-285, Glu-299, and Asn-301 each coordinate Mn(2+). Positions 403–541 (LDAAPKLDLE…STYNGVENEA (139 aa)) are oligomerization domain. The segment at 542-944 (VPSDREKIMI…AFAKAQIAAG (403 aa)) is carbamoyl phosphate synthetic domain. Residues 666-857 (AKLLKQIGLK…VARIAAKIMV (192 aa)) form the ATP-grasp 2 domain. Residues Arg-702, Lys-741, Leu-743, Glu-748, Gly-773, Val-774, His-775, Ser-776, Gln-816, and Glu-828 each coordinate ATP. Mg(2+)-binding residues include Gln-816, Glu-828, and Asn-830. Residues Gln-816, Glu-828, and Asn-830 each contribute to the Mn(2+) site. Positions 945 to 1099 (NPLPTTGAIL…VRRLTDTWKM (155 aa)) constitute an MGS-like domain. Residues 945–1099 (NPLPTTGAIL…VRRLTDTWKM (155 aa)) form an allosteric domain region.

It belongs to the CarB family. In terms of assembly, composed of two chains; the small (or glutamine) chain promotes the hydrolysis of glutamine to ammonia, which is used by the large (or ammonia) chain to synthesize carbamoyl phosphate. Tetramer of heterodimers (alpha,beta)4. It depends on Mg(2+) as a cofactor. The cofactor is Mn(2+).

It catalyses the reaction hydrogencarbonate + L-glutamine + 2 ATP + H2O = carbamoyl phosphate + L-glutamate + 2 ADP + phosphate + 2 H(+). The catalysed reaction is hydrogencarbonate + NH4(+) + 2 ATP = carbamoyl phosphate + 2 ADP + phosphate + 2 H(+). It participates in amino-acid biosynthesis; L-arginine biosynthesis; carbamoyl phosphate from bicarbonate: step 1/1. Its pathway is pyrimidine metabolism; UMP biosynthesis via de novo pathway; (S)-dihydroorotate from bicarbonate: step 1/3. In terms of biological role, large subunit of the glutamine-dependent carbamoyl phosphate synthetase (CPSase). CPSase catalyzes the formation of carbamoyl phosphate from the ammonia moiety of glutamine, carbonate, and phosphate donated by ATP, constituting the first step of 2 biosynthetic pathways, one leading to arginine and/or urea and the other to pyrimidine nucleotides. The large subunit (synthetase) binds the substrates ammonia (free or transferred from glutamine from the small subunit), hydrogencarbonate and ATP and carries out an ATP-coupled ligase reaction, activating hydrogencarbonate by forming carboxy phosphate which reacts with ammonia to form carbamoyl phosphate. The sequence is that of Carbamoyl phosphate synthase large chain from Thermotoga petrophila (strain ATCC BAA-488 / DSM 13995 / JCM 10881 / RKU-1).